The following is an 828-amino-acid chain: Periplasmic nitrate reductase (828 aa).

A signal peptide (tat-type signal) is located at residues 1 to 31 (MKLSRRHFMKANAVAAAAAVAGITIPIAVRA). In terms of domain architecture, 4Fe-4S Mo/W bis-MGD-type spans 39–95 (IHWDKAPCRFCGVGCGVLVGTQNGRIVASQGDPDAPVNRGLNCIKGYFLPKIMYGQD). The [4Fe-4S] cluster site is built by cysteine 46, cysteine 49, cysteine 53, and cysteine 81. Mo-bis(molybdopterin guanine dinucleotide)-binding positions include lysine 83, glutamine 150, asparagine 175, cysteine 179, 212–219 (WGSNMAEM), 243–247 (STYQH), 262–264 (QTD), methionine 372, glutamine 376, asparagine 482, 508–509 (SD), lysine 531, aspartate 558, and 718–727 (TGRVLEHWHT). Phenylalanine 794 is a binding site for substrate. Mo-bis(molybdopterin guanine dinucleotide) is bound by residues asparagine 802 and lysine 819.

The protein belongs to the prokaryotic molybdopterin-containing oxidoreductase family. NasA/NapA/NarB subfamily. Component of the periplasmic nitrate reductase NapAB complex composed of NapA and NapB. The cofactor is [4Fe-4S] cluster. Requires Mo-bis(molybdopterin guanine dinucleotide) as cofactor. Post-translationally, predicted to be exported by the Tat system. The position of the signal peptide cleavage has not been experimentally proven.

It localises to the periplasm. It carries out the reaction 2 Fe(II)-[cytochrome] + nitrate + 2 H(+) = 2 Fe(III)-[cytochrome] + nitrite + H2O. Functionally, catalytic subunit of the periplasmic nitrate reductase complex NapAB. Receives electrons from NapB and catalyzes the reduction of nitrate to nitrite. This chain is Periplasmic nitrate reductase, found in Pectobacterium carotovorum subsp. carotovorum (strain PC1).